Here is a 64-residue protein sequence, read N- to C-terminus: Alpha-conotoxin SI (64 aa).

The first 21 residues, 1 to 21, serve as a signal peptide directing secretion; the sequence is MGMRMMFTVFLLVVLATTVVS. The propeptide occupies 22–49; sequence FPSDRASDGRDDEAKDERSDMHESDRKE. The disordered stretch occupies residues 23-47; it reads PSDRASDGRDDEAKDERSDMHESDR. The segment covering 26–47 has biased composition (basic and acidic residues); the sequence is RASDGRDDEAKDERSDMHESDR. Disulfide bonds link Cys-51/Cys-56 and Cys-52/Cys-62. Position 62 is a cysteine amide (Cys-62).

It belongs to the conotoxin A superfamily. In terms of tissue distribution, expressed by the venom duct.

It is found in the secreted. Alpha-conotoxins act on postsynaptic membranes, they bind to the nicotinic acetylcholine receptors (nAChR) and thus inhibit them. Is active on muscle nAChR (IC(50)=113 nM on adult subtype (alpha-1-beta-1-gamma-delta/CHRNA1-CHRNB1-CHRNG-CHRND) and IC(50)=142 nM on fetal subtype (alpha-1-beta-1-delta-epsilon/CHRNA1-CHRNB1-CHRND-CHRNE)). On mice muscle receptors, its higher affinity site is the alpha/delta nAChR subunit interface. On Torpedo receptors, it does not distinguish between alpha/delta and alpha/gamma acetylcholine-binding sites. In vivo, causes paralysis followed by death when injected into goldfish. In contrast, has no effect on mice, when similar doses are intraperitoneally or intracerebrally injected. This is Alpha-conotoxin SI from Conus striatus (Striated cone).